The chain runs to 419 residues: Tyrosine--tRNA ligase (419 aa).

Tyr34 contacts L-tyrosine. Residues 39-48 (PSGDSMHIGH) carry the 'HIGH' region motif. Tyr168 and Gln172 together coordinate L-tyrosine. The short motif at 230-234 (KFGKS) is the 'KMSKS' region element. Lys233 provides a ligand contact to ATP. Residues 352-418 (ANLVDWLVTL…GKKKYFLVSY (67 aa)) form the S4 RNA-binding domain.

It belongs to the class-I aminoacyl-tRNA synthetase family. TyrS type 1 subfamily. As to quaternary structure, homodimer.

Its subcellular location is the cytoplasm. It catalyses the reaction tRNA(Tyr) + L-tyrosine + ATP = L-tyrosyl-tRNA(Tyr) + AMP + diphosphate + H(+). Functionally, catalyzes the attachment of tyrosine to tRNA(Tyr) in a two-step reaction: tyrosine is first activated by ATP to form Tyr-AMP and then transferred to the acceptor end of tRNA(Tyr). The chain is Tyrosine--tRNA ligase from Listeria monocytogenes serovar 1/2a (strain ATCC BAA-679 / EGD-e).